A 46-amino-acid chain; its full sequence is uncharacterized protein (46 aa).

Its subcellular location is the mitochondrion. This is an uncharacterized protein from Saccharomyces cerevisiae (strain ATCC 204508 / S288c) (Baker's yeast).